The following is a 311-amino-acid chain: Delta-1-pyrroline-5-carboxylate reductase kk1I (311 aa).

An N-terminal signal peptide occupies residues 1–31 (MTKRESNTLAVLGCGMVFLVSLLDLANRLLG). An N-linked (GlcNAc...) asparagine glycan is attached at Asn59.

It belongs to the pyrroline-5-carboxylate reductase family.

The protein operates within secondary metabolite biosynthesis. In terms of biological role, delta-1-pyrroline-5-carboxylate reductase; part of the gene cluster that mediates the biosynthesis of KK-1, a novel cyclic depsipeptide with 10 residues which is a promising active compound with high activity against many plant pathogens, especially Botrytis cinerea. Within the pathway, kk1I catalyzes the synthesis of the L-pipecolic acid residue of KK-1 from delta-1-pyrroline-5-carboxylate (P5C), a metabolic intermediate of lysine. The nonribosomal peptide synthetase (NRPS) kk1B catalyzes the elongation and cyclization of the decapeptide chain composed of 1 D-lactic acid residue (D-Lac), 1 pipecolic acid residue (Pip), 1 aspartic acid residue (Asp), 1 isoleucine residue (Ile), 1 glycine residue (Gly), 1 tyrosine residue (Tyr) and 4 valine residues (Val). The Asp, Ile and 3 Val residues are N-methylated by the 5 methyltransferase domains from the NRPS (found in modules 3, 5, 6, 7 and 9), whereas the Tyr residue is O-methylated by the cluster encoded O-methyltransferase kk1A. The thioesterase kk1J is likely to be involved in the corrective mechanism of peptide chain synthesis. The D-lactate dehydrogenase kk1H is involved in the synthesis of D-lactic acid from pyruvic acid, which is recognized by the A domain of the first kk1B module. The pyrroline-5-carboxylate reductase kk1I is involved in the synthesis of the L-pipecolic acid residue of KK-1 from delta-1-pyrroline-5-carboxylate (P5C), a metabolic intermediate of lysine. It still is unclear how kk1C and kk1D are involved in the production of KK-1. This Curvularia clavata protein is Delta-1-pyrroline-5-carboxylate reductase kk1I.